Here is a 350-residue protein sequence, read N- to C-terminus: Glycerol-1-phosphate dehydrogenase [NAD(P)+] (350 aa).

NAD(+)-binding positions include 97–101 (GSKID) and 119–122 (TTPS). Asp-124 is a substrate binding site. Ser-128 is an NAD(+) binding site. Asp-171 is a binding site for substrate. Residues Asp-171 and His-251 each coordinate Zn(2+). Residue His-255 coordinates substrate. His-267 provides a ligand contact to Zn(2+).

It belongs to the glycerol-1-phosphate dehydrogenase family. Zn(2+) serves as cofactor.

It is found in the cytoplasm. It carries out the reaction sn-glycerol 1-phosphate + NAD(+) = dihydroxyacetone phosphate + NADH + H(+). The enzyme catalyses sn-glycerol 1-phosphate + NADP(+) = dihydroxyacetone phosphate + NADPH + H(+). The protein operates within membrane lipid metabolism; glycerophospholipid metabolism. Functionally, catalyzes the NAD(P)H-dependent reduction of dihydroxyacetonephosphate (DHAP or glycerone phosphate) to glycerol 1-phosphate (G1P). The G1P thus generated is used as the glycerophosphate backbone of phospholipids in the cellular membranes of Archaea. The polypeptide is Glycerol-1-phosphate dehydrogenase [NAD(P)+] (Picrophilus torridus (strain ATCC 700027 / DSM 9790 / JCM 10055 / NBRC 100828 / KAW 2/3)).